The following is a 159-amino-acid chain: Ribosomal RNA large subunit methyltransferase H (159 aa).

Residues Leu-76, Gly-108, and Phe-127 to Leu-132 contribute to the S-adenosyl-L-methionine site.

It belongs to the RNA methyltransferase RlmH family. Homodimer.

It is found in the cytoplasm. It carries out the reaction pseudouridine(1915) in 23S rRNA + S-adenosyl-L-methionine = N(3)-methylpseudouridine(1915) in 23S rRNA + S-adenosyl-L-homocysteine + H(+). Its function is as follows. Specifically methylates the pseudouridine at position 1915 (m3Psi1915) in 23S rRNA. In Streptococcus sanguinis (strain SK36), this protein is Ribosomal RNA large subunit methyltransferase H.